Reading from the N-terminus, the 396-residue chain is Penicillopepsin-1 (396 aa).

Residues 1–20 form the signal peptide; that stretch reads MVVFSKVTASLACFSAVVSA. Residues 21 to 72 constitute a propeptide, activation peptide; the sequence is AAVPVKSPRQGFSVNQVQKTVTGTRTVNLPGVYANALAKYGATVPANVHAAA. Residues 88 to 393 form the Peptidase A1 domain; the sequence is YLTPVKIGES…DAEGPRLGFA (306 aa). Catalysis depends on residues aspartate 104 and aspartate 285. An N-linked (GlcNAc...) asparagine glycan is attached at asparagine 311. Cysteines 321 and 356 form a disulfide.

This sequence belongs to the peptidase A1 family. In terms of assembly, monomer.

It is found in the secreted. It carries out the reaction Hydrolysis of proteins with broad specificity similar to that of pepsin A, preferring hydrophobic residues at P1 and P1', but also cleaving 20-Gly-|-Glu-21 in the B chain of insulin. Clots milk, and activates trypsinogen.. Functionally, secreted aspartic endopeptidase that allows assimilation of proteinaceous substrates. The scissile peptide bond is attacked by a nucleophilic water molecule activated by two aspartic residues in the active site. Shows a broad primary substrate specificity. Favors hydrophobic residues at the P1 and P1' positions, but can also activate trypsinogen and hydrolyze the B chain of insulin between positions 'Gly-20' and 'Glu-21'. The sequence is that of Penicillopepsin-1 (pepA) from Penicillium rubens (strain ATCC 28089 / DSM 1075 / NRRL 1951 / Wisconsin 54-1255) (Penicillium chrysogenum).